A 910-amino-acid chain; its full sequence is Valine--tRNA ligase (910 aa).

Positions 45–55 (PNVTGSLHMGH) match the 'HIGH' region motif. A 'KMSKS' region motif is present at residues 554–558 (KMSKS). Lys557 contributes to the ATP binding site. Residues 842–910 (DLQAEAARLA…TAESRIRDAS (69 aa)) adopt a coiled-coil conformation.

Belongs to the class-I aminoacyl-tRNA synthetase family. ValS type 1 subfamily. As to quaternary structure, monomer.

The protein localises to the cytoplasm. The enzyme catalyses tRNA(Val) + L-valine + ATP = L-valyl-tRNA(Val) + AMP + diphosphate. Catalyzes the attachment of valine to tRNA(Val). As ValRS can inadvertently accommodate and process structurally similar amino acids such as threonine, to avoid such errors, it has a 'posttransfer' editing activity that hydrolyzes mischarged Thr-tRNA(Val) in a tRNA-dependent manner. The protein is Valine--tRNA ligase of Brucella melitensis biotype 1 (strain ATCC 23456 / CCUG 17765 / NCTC 10094 / 16M).